Reading from the N-terminus, the 156-residue chain is MKIQLIAVGTKMPDWVEKGYQEYARRFPKEMQLELLEINAGKRGKNADIKRILKKEGELTLAAIPKGNKIVTLEVTGQAWTTEQLADEMGKWQLDARNISLLIGGPEGLAPECITKSEQRWSLSALTLPHPLVRVIVAESLYRAFTLTINHPYHRE.

S-adenosyl-L-methionine is bound by residues Leu73, Gly104, and Leu123 to Leu128.

Belongs to the RNA methyltransferase RlmH family. In terms of assembly, homodimer.

It localises to the cytoplasm. It catalyses the reaction pseudouridine(1915) in 23S rRNA + S-adenosyl-L-methionine = N(3)-methylpseudouridine(1915) in 23S rRNA + S-adenosyl-L-homocysteine + H(+). Specifically methylates the pseudouridine at position 1915 (m3Psi1915) in 23S rRNA. The chain is Ribosomal RNA large subunit methyltransferase H from Psychromonas ingrahamii (strain DSM 17664 / CCUG 51855 / 37).